The sequence spans 255 residues: Coniferyl-alcohol dehydrogenase (255 aa).

Residues 12–17 (GVSSGI), aspartate 36, 51–52 (DL), and glycine 77 each bind NAD(+). Serine 117 contacts substrate. Residues tyrosine 157 and lysine 161 each coordinate NAD(+). Residue tyrosine 157 is the Proton acceptor of the active site.

This sequence belongs to the short-chain dehydrogenases/reductases (SDR) family.

The catalysed reaction is (E)-coniferol + NADP(+) = (E)-coniferaldehyde + NADPH + H(+). In terms of biological role, catalyzes the conversion of coniferyl alcohol into coniferyl aldehyde in the eugenol degradation pathway. Specific for coniferyl alcohol; does not act on cinnamyl alcohol, 4-coumaryl alcohol or sinapyl alcohol. The chain is Coniferyl-alcohol dehydrogenase (calA) from Pseudomonas sp. (strain HR199 / DSM 7063).